The sequence spans 359 residues: Sulfate/thiosulfate import ATP-binding protein CysA (359 aa).

In terms of domain architecture, ABC transporter spans 3-237 (VRVAGVRKEF…PNSPFVYGFI (235 aa)). 35 to 42 (GPSGSGKT) lines the ATP pocket.

The protein belongs to the ABC transporter superfamily. Sulfate/tungstate importer (TC 3.A.1.6) family. In terms of assembly, the complex is composed of two ATP-binding proteins (CysA), two transmembrane proteins (CysT and CysW) and a solute-binding protein (CysP).

The protein resides in the cell inner membrane. It catalyses the reaction sulfate(out) + ATP + H2O = sulfate(in) + ADP + phosphate + H(+). The catalysed reaction is thiosulfate(out) + ATP + H2O = thiosulfate(in) + ADP + phosphate + H(+). Its function is as follows. Part of the ABC transporter complex CysAWTP involved in sulfate/thiosulfate import. Responsible for energy coupling to the transport system. This is Sulfate/thiosulfate import ATP-binding protein CysA from Brucella melitensis biotype 1 (strain ATCC 23456 / CCUG 17765 / NCTC 10094 / 16M).